The sequence spans 257 residues: Phosphate import ATP-binding protein PstB (257 aa).

Residues 11–252 (FNISRLYLYI…PKNELTEKYV (242 aa)) form the ABC transporter domain. Position 43–50 (43–50 (GPSGSGKS)) interacts with ATP.

The protein belongs to the ABC transporter superfamily. Phosphate importer (TC 3.A.1.7) family. The complex is composed of two ATP-binding proteins (PstB), two transmembrane proteins (PstC and PstA) and a solute-binding protein (PstS).

Its subcellular location is the cell membrane. It catalyses the reaction phosphate(out) + ATP + H2O = ADP + 2 phosphate(in) + H(+). Its function is as follows. Part of the ABC transporter complex PstSACB involved in phosphate import. Responsible for energy coupling to the transport system. In Saccharolobus solfataricus (strain ATCC 35092 / DSM 1617 / JCM 11322 / P2) (Sulfolobus solfataricus), this protein is Phosphate import ATP-binding protein PstB.